A 275-amino-acid chain; its full sequence is Large ribosomal subunit protein uL2 (275 aa).

Residues 223 to 275 (VAMNPVDHPHGGGEGRTSGGRHPVTPWGVPTKGYKTRSNKRTDKYIVRRRNKK) are disordered.

It belongs to the universal ribosomal protein uL2 family. As to quaternary structure, part of the 50S ribosomal subunit. Forms a bridge to the 30S subunit in the 70S ribosome.

Functionally, one of the primary rRNA binding proteins. Required for association of the 30S and 50S subunits to form the 70S ribosome, for tRNA binding and peptide bond formation. It has been suggested to have peptidyltransferase activity; this is somewhat controversial. Makes several contacts with the 16S rRNA in the 70S ribosome. This is Large ribosomal subunit protein uL2 from Shewanella loihica (strain ATCC BAA-1088 / PV-4).